Consider the following 253-residue polypeptide: 2,3-bisphosphoglycerate-dependent phosphoglycerate mutase (253 aa).

Substrate is bound by residues 12–19, 25–26, R64, 91–94, K102, 118–119, and 187–188; these read RHGESEWN, TG, ERHY, RR, and GN. H13 serves as the catalytic Tele-phosphohistidine intermediate. E91 functions as the Proton donor/acceptor in the catalytic mechanism.

It belongs to the phosphoglycerate mutase family. BPG-dependent PGAM subfamily.

The enzyme catalyses (2R)-2-phosphoglycerate = (2R)-3-phosphoglycerate. It participates in carbohydrate degradation; glycolysis; pyruvate from D-glyceraldehyde 3-phosphate: step 3/5. Its function is as follows. Catalyzes the interconversion of 2-phosphoglycerate and 3-phosphoglycerate. The protein is 2,3-bisphosphoglycerate-dependent phosphoglycerate mutase of Streptomyces griseus subsp. griseus (strain JCM 4626 / CBS 651.72 / NBRC 13350 / KCC S-0626 / ISP 5235).